The sequence spans 194 residues: MRERTEARRRRIEEVLRRRQPDLTVLLENVHKPHNLSAILRTCDAVGVLEAHAVNPTGGVPTFNETSGGSHKWVYLRVHPDLHEAFRFLKERGFTVYATALREDARDFREVDYTKPTAVLFGAEKWGVSEEALALADGAIKIPMLGMVQSLNVSVAAAVILFEAQRQRLKAGLYDRPRLDPELYQKVLADWLRK.

S-adenosyl-L-methionine-binding positions include Thr-99, Gly-122–Trp-126, Ile-142, and Leu-151.

Belongs to the class IV-like SAM-binding methyltransferase superfamily. RNA methyltransferase TrmH family. As to quaternary structure, monomer.

The catalysed reaction is guanosine(18) in tRNA + S-adenosyl-L-methionine = 2'-O-methylguanosine(18) in tRNA + S-adenosyl-L-homocysteine + H(+). With respect to regulation, stimulated by magnesium ions and spermine. Inhibited by S-adenosyl-homocysteine. Its function is as follows. Catalyzes the 2'-O methylation of guanosine at position 18 in tRNA. This is tRNA (guanosine(18)-2'-O)-methyltransferase from Thermus thermophilus (strain ATCC BAA-163 / DSM 7039 / HB27).